Reading from the N-terminus, the 119-residue chain is Small ribosomal subunit protein uS13 (119 aa).

Positions 94–113 (GLPVRGQRTKTNARTRKGPR) are enriched in basic residues. The disordered stretch occupies residues 94-119 (GLPVRGQRTKTNARTRKGPRKAIGAK).

Belongs to the universal ribosomal protein uS13 family. As to quaternary structure, part of the 30S ribosomal subunit. Forms a loose heterodimer with protein S19. Forms two bridges to the 50S subunit in the 70S ribosome.

Located at the top of the head of the 30S subunit, it contacts several helices of the 16S rRNA. In the 70S ribosome it contacts the 23S rRNA (bridge B1a) and protein L5 of the 50S subunit (bridge B1b), connecting the 2 subunits; these bridges are implicated in subunit movement. Contacts the tRNAs in the A and P-sites. This chain is Small ribosomal subunit protein uS13, found in Nitrosomonas europaea (strain ATCC 19718 / CIP 103999 / KCTC 2705 / NBRC 14298).